A 464-amino-acid chain; its full sequence is tRNA-2-methylthio-N(6)-dimethylallyladenosine synthase (464 aa).

Residues 4–119 (RTFHIMTFGC…APQAIERLVQ (116 aa)) enclose the MTTase N-terminal domain. [4Fe-4S] cluster-binding residues include C13, C48, C82, C158, C162, and C165. The Radical SAM core domain maps to 144–375 (GEVPVSAYVN…QEVQNEYSEA (232 aa)). Positions 378–461 (QAMVGKTVMV…KHSLTGEPAG (84 aa)) constitute a TRAM domain. The segment at 393 to 420 (SPKSAAGSGTDAQNAAEESGRTASSWQG) is disordered.

This sequence belongs to the methylthiotransferase family. MiaB subfamily. Monomer. [4Fe-4S] cluster is required as a cofactor.

It is found in the cytoplasm. It catalyses the reaction N(6)-dimethylallyladenosine(37) in tRNA + (sulfur carrier)-SH + AH2 + 2 S-adenosyl-L-methionine = 2-methylsulfanyl-N(6)-dimethylallyladenosine(37) in tRNA + (sulfur carrier)-H + 5'-deoxyadenosine + L-methionine + A + S-adenosyl-L-homocysteine + 2 H(+). Its function is as follows. Catalyzes the methylthiolation of N6-(dimethylallyl)adenosine (i(6)A), leading to the formation of 2-methylthio-N6-(dimethylallyl)adenosine (ms(2)i(6)A) at position 37 in tRNAs that read codons beginning with uridine. This chain is tRNA-2-methylthio-N(6)-dimethylallyladenosine synthase, found in Oleidesulfovibrio alaskensis (strain ATCC BAA-1058 / DSM 17464 / G20) (Desulfovibrio alaskensis).